Reading from the N-terminus, the 376-residue chain is Tetraacyldisaccharide 4'-kinase (376 aa).

51–58 provides a ligand contact to ATP; it reads AVGGTGKT.

It belongs to the LpxK family.

It catalyses the reaction a lipid A disaccharide + ATP = a lipid IVA + ADP + H(+). It functions in the pathway glycolipid biosynthesis; lipid IV(A) biosynthesis; lipid IV(A) from (3R)-3-hydroxytetradecanoyl-[acyl-carrier-protein] and UDP-N-acetyl-alpha-D-glucosamine: step 6/6. Transfers the gamma-phosphate of ATP to the 4'-position of a tetraacyldisaccharide 1-phosphate intermediate (termed DS-1-P) to form tetraacyldisaccharide 1,4'-bis-phosphate (lipid IVA). This is Tetraacyldisaccharide 4'-kinase from Bacteroides fragilis (strain ATCC 25285 / DSM 2151 / CCUG 4856 / JCM 11019 / LMG 10263 / NCTC 9343 / Onslow / VPI 2553 / EN-2).